The following is a 388-amino-acid chain: DNA polymerase processivity factor (388 aa).

Disordered regions lie at residues 20–44 (EMER…TREP) and 306–388 (ESRF…RCVV). The span at 26-36 (RDHHRDHRDHR) shows a compositional bias: basic residues. Residues 306–328 (ESRFERMGKQDDGKGDRSHKNED) show a composition bias toward basic and acidic residues.

The protein belongs to the herpesviridae polymerase accessory protein family.

Functionally, accessory subunit of the DNA polymerase that acts to increase the processivity of polymerization. The protein is DNA polymerase processivity factor (U27) of Homo sapiens (Human).